A 366-amino-acid polypeptide reads, in one-letter code: MASAVLSSVLTTASRFALLQVDSGSGSDSEPGKGKGRNNGKSQTLGNKSTANEKKREKRRKKKEQQQSEANELRNLAFKKIPQKSSHSVCNVQHELSLPNPVQKESREENWQEWRQRDEQLTSEMFEADLEKALLLSKLEYEEHRQDYENAENASTQTKVINKKDKRKNHQGKDKPLTVSLKDFQCEDHISKKTEESNSSQPLSHDGGFFNRLEDDVHKILVREKRREQLTEHNGTDNCPAPEHNQEVGLKDGRIERLKLELERKDAEIQKLKAVVTQWEAKYKEVKARNGQLLKMLQEGEMKDKAEILLQVDESQSIKNELTVQVSSLHAALEQERSKVKVLQAELAKYQGGRKGKRNCEPDQCR.

Residues 1-95 are interaction with IRS1; it reads MASAVLSSVL…SHSVCNVQHE (95 aa). Residues 20–105 form a disordered region; sequence QVDSGSGSDS…LSLPNPVQKE (86 aa). Phosphoserine occurs at positions 23, 25, and 27. Residues 39-50 show a composition bias toward polar residues; that stretch reads NGKSQTLGNKST. Residues 46–77 adopt a coiled-coil conformation; the sequence is GNKSTANEKKREKRRKKKEQQQSEANELRNLA. A Phosphoserine; by PKG modification is found at serine 106. Coiled-coil stretches lie at residues 129-160, 250-299, and 326-353; these read DLEK…QTKV, LKDG…MLQE, and VSSL…YQGG.

This sequence belongs to the GKAP1 family. In terms of assembly, interacts with PRKG1 and IRS1.

The protein localises to the golgi apparatus. In terms of biological role, regulates insulin-dependent IRS1 tyrosine phosphorylation in adipocytes by modulating the availability of IRS1 to IR tyrosine kinase. Its association with IRS1 is required for insulin-induced translocation of SLC2A4 to the cell membrane. Involved in TNF-induced impairment of insulin-dependent IRS1 tyrosine phosphorylation. The sequence is that of G kinase-anchoring protein 1 (Gkap1) from Rattus norvegicus (Rat).